The primary structure comprises 198 residues: Peptidyl-tRNA hydrolase (198 aa).

Tyrosine 16 provides a ligand contact to tRNA. The Proton acceptor role is filled by histidine 21. Residues phenylalanine 67, asparagine 69, and asparagine 115 each coordinate tRNA.

It belongs to the PTH family. In terms of assembly, monomer.

The protein localises to the cytoplasm. The catalysed reaction is an N-acyl-L-alpha-aminoacyl-tRNA + H2O = an N-acyl-L-amino acid + a tRNA + H(+). Hydrolyzes ribosome-free peptidyl-tRNAs (with 1 or more amino acids incorporated), which drop off the ribosome during protein synthesis, or as a result of ribosome stalling. Functionally, catalyzes the release of premature peptidyl moieties from peptidyl-tRNA molecules trapped in stalled 50S ribosomal subunits, and thus maintains levels of free tRNAs and 50S ribosomes. The sequence is that of Peptidyl-tRNA hydrolase from Prochlorococcus marinus (strain MIT 9301).